A 435-amino-acid chain; its full sequence is DMATS-type prenyltransferase fscG (435 aa).

Dimethylallyl diphosphate contacts are provided by Arg-111, Lys-193, Tyr-195, Arg-259, Lys-261, Tyr-263, Tyr-352, and Tyr-423.

The protein belongs to the tryptophan dimethylallyltransferase family.

Its pathway is secondary metabolite biosynthesis. DMATS-type prenyltransferase; part of the fragmented gene cluster that mediates the biosynthesis of fusarochromene, a tryptophan-derived metabolite closely related to a group of mycotoxins including fusarochromanone. Within the pathway, fscG catalyzes the prenylation of the primary alcohol produced by fscA which is necessary for the formation of the chromene ring by the oxidoreductase fscI. The first step of the pathway is the epimerization of L-tryptophan to D-tryptophan in the presence of the NRPS-like tryptophan epimerase fscC. D-tryptophan is subsequently hydroxylated by the tryptophan 6-hydroxylase fscE to yield 6-hydroxytryptophan. The pyrrole ring undergoes cleavaged by the tryptophan 2,3-dioxygenase fscD and is finally converted to 4-hydroxykyrunenine by the hydrolase fscH. The NRPS-like oxidoreductase fscA reduces the carboxyl group to primary alcohol and the DMATS-type prenyltransferase fscG performs prenylation, followed by the formation of a chromene ring catalyzed by the oxidoreductase fscI, which leads to desacetylfusarochromene. Epoxidation by fscF and rearrangement reactions of chromene double bonds convert compound desacetylfusarochromene to fusarochromanones. Although specific acetyltransferases were not found near the fsc gene cluster, several predicted enzymes containing the N-acetyltransferase superfamily domain are present in the genome of F.equiseti. These predicted enzymes may have the potential to convert desacetylfusarochromene to fusarochromene. The sequence is that of DMATS-type prenyltransferase fscG from Fusarium equiseti (Fusarium scirpi).